The sequence spans 200 residues: Histone H1 (200 aa).

A compositionally biased stretch (low complexity) spans 1–14; the sequence is MPPKKAPTTAKKAA. Disordered stretches follow at residues 1 to 20 and 78 to 200; these read MPPKKAPTTAKKAASGPTHT and DFIQ…NKKA. Residues 18–93 form the H15 domain; that stretch reads THTSYRDMIK…GTSGPVKLAK (76 aa). The span at 94–116 shows a compositional bias: low complexity; that stretch reads KQAPAKPAPKKPATTTKTAAPKK. Positions 120–131 are enriched in basic and acidic residues; the sequence is KKADKAEKAEKP. The segment covering 159–185 has biased composition (low complexity); the sequence is TAAPAVVDKPKVVSVTKSGRKTTTTAK.

It belongs to the histone H1/H5 family.

It is found in the nucleus. The protein localises to the chromosome. Could act as an H1-type linker histone. The chain is Histone H1 (hhoA) from Emericella nidulans (strain FGSC A4 / ATCC 38163 / CBS 112.46 / NRRL 194 / M139) (Aspergillus nidulans).